A 173-amino-acid polypeptide reads, in one-letter code: Peptide deformylase (173 aa).

Fe cation is bound by residues C98 and H140. E141 is an active-site residue. Residue H144 participates in Fe cation binding.

The protein belongs to the polypeptide deformylase family. The cofactor is Fe(2+).

The enzyme catalyses N-terminal N-formyl-L-methionyl-[peptide] + H2O = N-terminal L-methionyl-[peptide] + formate. Its function is as follows. Removes the formyl group from the N-terminal Met of newly synthesized proteins. Requires at least a dipeptide for an efficient rate of reaction. N-terminal L-methionine is a prerequisite for activity but the enzyme has broad specificity at other positions. In Caulobacter vibrioides (strain ATCC 19089 / CIP 103742 / CB 15) (Caulobacter crescentus), this protein is Peptide deformylase.